The sequence spans 102 residues: NADH-quinone oxidoreductase subunit K (102 aa).

Helical transmembrane passes span 5–25 (IAHY…GIFL), 31–51 (IVIL…FVAF), and 66–86 (FVLT…VVFF).

Belongs to the complex I subunit 4L family. As to quaternary structure, NDH-1 is composed of 14 different subunits. Subunits NuoA, H, J, K, L, M, N constitute the membrane sector of the complex.

It is found in the cell inner membrane. It carries out the reaction a quinone + NADH + 5 H(+)(in) = a quinol + NAD(+) + 4 H(+)(out). NDH-1 shuttles electrons from NADH, via FMN and iron-sulfur (Fe-S) centers, to quinones in the respiratory chain. The immediate electron acceptor for the enzyme in this species is believed to be ubiquinone. Couples the redox reaction to proton translocation (for every two electrons transferred, four hydrogen ions are translocated across the cytoplasmic membrane), and thus conserves the redox energy in a proton gradient. This Brucella abortus (strain S19) protein is NADH-quinone oxidoreductase subunit K.